The chain runs to 397 residues: 42.8 kDa protein in whiE locus (397 aa).

Residues 1 to 22 (MTVSPVVATDAPSTDATRTTAT) form a disordered region. The segment covering 8-22 (ATDAPSTDATRTTAT) has biased composition (low complexity). Residues 46–137 (VRVVLMLDVH…DTHSLRYSVL (92 aa)) form the ABM domain.

This sequence belongs to the SchA/CurD family.

This chain is 42.8 kDa protein in whiE locus, found in Streptomyces coelicolor (strain ATCC BAA-471 / A3(2) / M145).